The sequence spans 249 residues: Diphthine synthase (249 aa).

S-adenosyl-L-methionine contacts are provided by residues D83, L86, 111-112, L163, and L205; that span reads SI.

Belongs to the diphthine synthase family. As to quaternary structure, homodimer.

It carries out the reaction 2-[(3S)-amino-3-carboxypropyl]-L-histidyl-[translation elongation factor 2] + 3 S-adenosyl-L-methionine = diphthine-[translation elongation factor 2] + 3 S-adenosyl-L-homocysteine + 3 H(+). Its pathway is protein modification; peptidyl-diphthamide biosynthesis. Functionally, S-adenosyl-L-methionine-dependent methyltransferase that catalyzes the trimethylation of the amino group of the modified target histidine residue in translation elongation factor 2 (EF-2), to form an intermediate called diphthine. The three successive methylation reactions represent the second step of diphthamide biosynthesis. This Pyrobaculum islandicum (strain DSM 4184 / JCM 9189 / GEO3) protein is Diphthine synthase.